A 186-amino-acid chain; its full sequence is Orotate phosphoribosyltransferase (186 aa).

Residues arginine 96, lysine 100, histidine 102, and 121-129 (DDVATTGTS) each bind 5-phospho-alpha-D-ribose 1-diphosphate. 2 residues coordinate orotate: threonine 125 and arginine 153.

It belongs to the purine/pyrimidine phosphoribosyltransferase family. PyrE subfamily. In terms of assembly, homodimer. The cofactor is Mg(2+).

The enzyme catalyses orotidine 5'-phosphate + diphosphate = orotate + 5-phospho-alpha-D-ribose 1-diphosphate. It functions in the pathway pyrimidine metabolism; UMP biosynthesis via de novo pathway; UMP from orotate: step 1/2. Functionally, catalyzes the transfer of a ribosyl phosphate group from 5-phosphoribose 1-diphosphate to orotate, leading to the formation of orotidine monophosphate (OMP). The protein is Orotate phosphoribosyltransferase of Aeropyrum pernix (strain ATCC 700893 / DSM 11879 / JCM 9820 / NBRC 100138 / K1).